Consider the following 628-residue polypeptide: Chaperone protein HtpG (628 aa).

The segment at 1–333 (MTTDTKATET…SADLPLNVSR (333 aa)) is a; substrate-binding. Residues 334-549 (EMIQESPLLA…EHGPDRQFER (216 aa)) form a b region. Residues 550 to 628 (LMNAAGRLDK…RLIARGIAKG (79 aa)) are c.

This sequence belongs to the heat shock protein 90 family. In terms of assembly, homodimer.

Its subcellular location is the cytoplasm. In terms of biological role, molecular chaperone. Has ATPase activity. The sequence is that of Chaperone protein HtpG from Mesorhizobium japonicum (strain LMG 29417 / CECT 9101 / MAFF 303099) (Mesorhizobium loti (strain MAFF 303099)).